We begin with the raw amino-acid sequence, 711 residues long: Polyribonucleotide nucleotidyltransferase (711 aa).

2 residues coordinate Mg(2+): D490 and D496. The KH domain occupies 557–619 (PRIETMTIPK…KCIDDAMRII (63 aa)). Residues 629 to 699 (GEVYVGKVRS…KTGKFKLSHK (71 aa)) enclose the S1 motif domain.

This sequence belongs to the polyribonucleotide nucleotidyltransferase family. Mg(2+) serves as cofactor.

The protein localises to the cytoplasm. It catalyses the reaction RNA(n+1) + phosphate = RNA(n) + a ribonucleoside 5'-diphosphate. Involved in mRNA degradation. Catalyzes the phosphorolysis of single-stranded polyribonucleotides processively in the 3'- to 5'-direction. The chain is Polyribonucleotide nucleotidyltransferase from Phocaeicola vulgatus (strain ATCC 8482 / DSM 1447 / JCM 5826 / CCUG 4940 / NBRC 14291 / NCTC 11154) (Bacteroides vulgatus).